The following is a 535-amino-acid chain: T-complex protein 1 subunit zeta (535 aa).

The protein belongs to the TCP-1 chaperonin family. Heterooligomeric complex of about 850 to 900 kDa that forms two stacked rings, 12 to 16 nm in diameter.

It localises to the cytoplasm. Its function is as follows. Molecular chaperone; assists the folding of proteins upon ATP hydrolysis. Known to play a role, in vitro, in the folding of actin and tubulin. The polypeptide is T-complex protein 1 subunit zeta (cct6) (Schizosaccharomyces pombe (strain 972 / ATCC 24843) (Fission yeast)).